A 315-amino-acid chain; its full sequence is L-lactate dehydrogenase (315 aa).

Residues valine 12, aspartate 33, and tyrosine 65 each contribute to the NAD(+) site. Substrate contacts are provided by residues glutamine 82, arginine 88, and 120 to 123; that span reads NPVD. NAD(+) is bound by residues 118–120 and serine 143; that span reads ISN. 148-151 contacts substrate; it reads DTSR. 2 residues coordinate beta-D-fructose 1,6-bisphosphate: arginine 153 and histidine 168. Histidine 175 acts as the Proton acceptor in catalysis. Position 219 is a phosphotyrosine (tyrosine 219). Residue threonine 228 coordinates substrate.

Belongs to the LDH/MDH superfamily. LDH family. Homotetramer.

It is found in the cytoplasm. It catalyses the reaction (S)-lactate + NAD(+) = pyruvate + NADH + H(+). Its pathway is fermentation; pyruvate fermentation to lactate; (S)-lactate from pyruvate: step 1/1. Allosterically activated by fructose 1,6-bisphosphate (FBP). Functionally, catalyzes the conversion of lactate to pyruvate. The polypeptide is L-lactate dehydrogenase (Mycoplasmopsis pulmonis (strain UAB CTIP) (Mycoplasma pulmonis)).